The sequence spans 432 residues: Cysteine desulfurase, mitosomal (432 aa).

Pyridoxal 5'-phosphate is bound by residues 102–103 (AT), Gln-212, and 232–234 (CAH). Lys-235 carries the post-translational modification N6-(pyridoxal phosphate)lysine. Thr-272 is a pyridoxal 5'-phosphate binding site. Cys-357 acts as the Cysteine persulfide intermediate in catalysis. Residue Cys-357 participates in [2Fe-2S] cluster binding.

The protein belongs to the class-V pyridoxal-phosphate-dependent aminotransferase family. NifS/IscS subfamily. Requires pyridoxal 5'-phosphate as cofactor.

Its subcellular location is the mitosome. It catalyses the reaction (sulfur carrier)-H + L-cysteine = (sulfur carrier)-SH + L-alanine. Catalyzes the removal of elemental sulfur from cysteine to produce alanine. It supplies the inorganic sulfur for iron-sulfur (Fe-S) clusters in mitosomes. This Encephalitozoon cuniculi (strain GB-M1) (Microsporidian parasite) protein is Cysteine desulfurase, mitosomal.